The chain runs to 274 residues: GCN5-related N-acetyltransferase 7, chloroplastic (274 aa).

A chloroplast-targeting transit peptide spans 1-65 (MAFLCSSLPS…STFVISESVS (65 aa)). Residues 75–267 (LRVRTFNELN…QRLLLWLALP (193 aa)) enclose the N-acetyltransferase domain. Acetyl-CoA-binding positions include 189–191 (VCV), 197–202 (RNGVGY), 228–230 (NEA), and Tyr-235. Residue Tyr-235 is the Proton donor of the active site.

This sequence belongs to the acetyltransferase family. GNAT subfamily. As to quaternary structure, oligomer. Autoacetylated. In terms of tissue distribution, expressed in green tissues.

The protein resides in the plastid. Its subcellular location is the chloroplast. It catalyses the reaction an N-terminal L-alpha-aminoacyl-[protein] + acetyl-CoA = N-terminal N(alpha)-acetyl-L-alpha-aminoacyl-[protein] + CoA + H(+). It carries out the reaction L-lysyl-[protein] + acetyl-CoA = N(6)-acetyl-L-lysyl-[protein] + CoA + H(+). The enzyme catalyses N-terminal L-alanyl-[protein] + acetyl-CoA = N-terminal N(alpha)-acetyl-L-alanyl-[protein] + CoA + H(+). The catalysed reaction is N-terminal L-seryl-[protein] + acetyl-CoA = N-terminal N(alpha)-acetyl-L-seryl-[protein] + CoA + H(+). It catalyses the reaction N-terminal L-threonyl-[protein] + acetyl-CoA = N-terminal N(alpha)-acetyl-L-threonyl-[protein] + CoA + H(+). It carries out the reaction N-terminal L-methionyl-[protein] + acetyl-CoA = N-terminal N(alpha)-acetyl-L-methionyl-[protein] + CoA + H(+). The enzyme catalyses N-terminal L-prolyl-[protein] + acetyl-CoA = N-terminal N(alpha)-acetyl-L-prolyl-[protein] + CoA + H(+). The catalysed reaction is N-terminal L-valyl-[protein] + acetyl-CoA = N-terminal N(alpha)-acetyl-L-valyl-[protein] + CoA + H(+). Its function is as follows. Protein acetyltransferase with dual specificity triggering both N-alpha-acetylation (NTA), with a large spectrum of modified N-termini, including methionine, alanine, serine, threonine and to a lower extent valine and proline as substrates, and epsilon-lysine acetylation (KA). This chain is GCN5-related N-acetyltransferase 7, chloroplastic, found in Arabidopsis thaliana (Mouse-ear cress).